Consider the following 287-residue polypeptide: Inorganic pyrophosphatase (287 aa).

Residue R79 coordinates diphosphate. Positions 116, 121, and 153 each coordinate Mg(2+).

Belongs to the PPase family. Mg(2+) is required as a cofactor.

It is found in the cytoplasm. The enzyme catalyses diphosphate + H2O = 2 phosphate + H(+). The polypeptide is Inorganic pyrophosphatase (IPP1) (Debaryomyces hansenii (strain ATCC 36239 / CBS 767 / BCRC 21394 / JCM 1990 / NBRC 0083 / IGC 2968) (Yeast)).